The primary structure comprises 253 residues: 3-isopropylmalate dehydratase small subunit 3 (253 aa).

Residues 1-56 (MATSQQFLNPTLFKSLASSNKNSCTLCPSPFLQLKSASTIFNYKPLTSSSATIITR) constitute a chloroplast transit peptide.

The protein belongs to the LeuD family. In terms of assembly, heterodimer of the large LEUC/IIL1 subunit and the small LEUD (SSU1, SSU2 or SSU3) subunits. As to expression, expressed in vascular bundles of roots, cotyledons and rosette leaves. Expressed in stem vascular bundles which branche off into lateral inflorescences. Expressed in connective tissues in anthers. In hypocotyls, expressed in parenchyma cells surrounding the vasculature. In rosette leaves, expressed in phloem cells and cells close to the xylem along the vascular bundles. In roots of adult plants, expressed in cells closely associated with the stele. In flowering stalks, expressed in parenchyma cells associated with the phloem or the xylem.

The protein resides in the plastid. Its subcellular location is the chloroplast stroma. It carries out the reaction (2R,3S)-3-isopropylmalate = (2S)-2-isopropylmalate. The enzyme catalyses a 2-(omega-methylsulfanyl)alkylmalate = a 2-(omega-methylsulfanyl)alkylmaleate + H2O. It catalyses the reaction 2-(3-methylsulfanyl)propylmalate = 2-(2-methylsulfanyl)propylmaleate + H2O. The catalysed reaction is a 3-(omega-methylsulfanyl)alkylmalate = a 2-(omega-methylsulfanyl)alkylmaleate + H2O. It carries out the reaction 2-(2-methylsulfanyl)ethylmalate = 2-(2-methylsulfanyl)ethylmaleate + H2O. The enzyme catalyses 3-(2-methylsulfanyl)ethylmalate = 2-(2-methylsulfanyl)ethylmaleate + H2O. It catalyses the reaction 3-(3-methylsulfanyl)propylmalate = 2-(2-methylsulfanyl)propylmaleate + H2O. The protein operates within amino-acid biosynthesis; L-leucine biosynthesis; L-leucine from 3-methyl-2-oxobutanoate: step 2/4. Catalyzes the isomerization between 2-isopropylmalate and 3-isopropylmalate, via the formation of 2-isopropylmaleate. Functions redundantly with LEUD1 in the methionine chain elongation pathway of aliphatic glucosinolate formation. This Arabidopsis thaliana (Mouse-ear cress) protein is 3-isopropylmalate dehydratase small subunit 3.